Consider the following 776-residue polypeptide: Systemic RNA interference defective protein 1 (776 aa).

Residues M1 to T17 form the signal peptide. The Extracellular segment spans residues Q18–A319. N-linked (GlcNAc...) asparagine glycosylation is found at N19, N20, N32, N205, N210, N234, N290, and N311. Positions T22–Q312 are involved in dsRNA-binding. Residues L320 to I340 traverse the membrane as a helical segment. At K341–Q429 the chain is on the cytoplasmic side. The segment at P360 to E390 is disordered. A compositionally biased stretch (basic and acidic residues) spans E362–Q373. Residues M430–H450 traverse the membrane as a helical segment. Residues K451–N481 are Extracellular-facing. A helical membrane pass occupies residues N482 to C502. The Cytoplasmic portion of the chain corresponds to R503–S510. The helical transmembrane segment at H511–L531 threads the bilayer. The Extracellular portion of the chain corresponds to Q532 to P543. Residues S544–V564 traverse the membrane as a helical segment. The Cytoplasmic segment spans residues R565–S575. The chain crosses the membrane as a helical span at residues P576–F596. Topologically, residues S597–T599 are extracellular. A helical membrane pass occupies residues S600–A620. The Cytoplasmic portion of the chain corresponds to K621–R633. Residues F634–S654 form a helical membrane-spanning segment. Topologically, residues A655 to N659 are extracellular. The chain crosses the membrane as a helical span at residues Q660–M680. The Cytoplasmic portion of the chain corresponds to K681 to K691. The helical transmembrane segment at A692 to Q712 threads the bilayer. Topologically, residues D713–D741 are extracellular. Residues L742–D762 form a helical membrane-spanning segment. Residues D763 to F776 lie on the Cytoplasmic side of the membrane.

It belongs to the SID1 family. In terms of assembly, may self-associate to form multimers. As to expression, expressed in most non-neuronal cells, including body wall muscle cells.

The protein localises to the cell membrane. In terms of biological role, plays a role in RNA-mediated gene silencing by acting cell-autonomously as a channel for the transport of double-stranded RNA (dsRNA) between cells. Mediates the spread of dsRNA and subsequent silencing of genes in cells distant from the site of dsRNA introduction. Selective for dsRNA. Preferentially binds long dsRNA, from 50 base pairs up to 700. Short 20 base-pair long molecules are not bound. May also bind dsDNA, but with lower affinity. Binding may be sequence-independent. Required for avoidance behavior induced by small RNAs derived from pathogenic bacteria such as P.aeruginosa. This is Systemic RNA interference defective protein 1 from Caenorhabditis elegans.